The chain runs to 364 residues: DNA replication and repair protein RecF (364 aa).

30 to 37 (GNNGQGKT) contacts ATP.

This sequence belongs to the RecF family.

The protein localises to the cytoplasm. The RecF protein is involved in DNA metabolism; it is required for DNA replication and normal SOS inducibility. RecF binds preferentially to single-stranded, linear DNA. It also seems to bind ATP. The polypeptide is DNA replication and repair protein RecF (Citrifermentans bemidjiense (strain ATCC BAA-1014 / DSM 16622 / JCM 12645 / Bem) (Geobacter bemidjiensis)).